We begin with the raw amino-acid sequence, 213 residues long: Orotate phosphoribosyltransferase (213 aa).

Lys26 contacts 5-phospho-alpha-D-ribose 1-diphosphate. 34-35 (FF) is a binding site for orotate. 5-phospho-alpha-D-ribose 1-diphosphate contacts are provided by residues 72–73 (YK), Arg99, Lys100, Lys103, His105, and 124–132 (DDVITAGTA). Thr128 and Arg156 together coordinate orotate.

Belongs to the purine/pyrimidine phosphoribosyltransferase family. PyrE subfamily. In terms of assembly, homodimer. The cofactor is Mg(2+).

It catalyses the reaction orotidine 5'-phosphate + diphosphate = orotate + 5-phospho-alpha-D-ribose 1-diphosphate. Its pathway is pyrimidine metabolism; UMP biosynthesis via de novo pathway; UMP from orotate: step 1/2. In terms of biological role, catalyzes the transfer of a ribosyl phosphate group from 5-phosphoribose 1-diphosphate to orotate, leading to the formation of orotidine monophosphate (OMP). This chain is Orotate phosphoribosyltransferase, found in Salmonella typhi.